We begin with the raw amino-acid sequence, 62 residues long: Pelophylaxin-4 (62 aa).

Residues 1 to 22 (MLTLKKSMLLIFFLGTINFSLC) form the signal peptide. A propeptide spanning residues 23–45 (EQERNADEEERRDEPEERDVEVQ) is cleaved from the precursor. Leu60 bears the Leucine amide mark. A propeptide is located at residue Gly61.

As to expression, expressed by the skin glands.

It localises to the secreted. Antimicrobial peptide. In Pelophylax fukienensis (Fukien gold-striped pond frog), this protein is Pelophylaxin-4.